Consider the following 231-residue polypeptide: Protein OPG061 (231 aa).

It belongs to the orthopoxvirus OPG058 family.

It localises to the host nucleus. The protein localises to the host nucleolus. The sequence is that of Protein OPG061 (OPG061) from Cynomys gunnisoni (Gunnison's prairie dog).